The chain runs to 300 residues: Hydroxyacyl-thioester dehydratase type 2, mitochondrial (300 aa).

It belongs to the HTD2 family.

It is found in the mitochondrion. In terms of biological role, mitochondrial 3-hydroxyacyl-thioester dehydratase involved in fatty acid biosynthesis. Required for respiratory growth and for normal mitochondrial morphology. The sequence is that of Hydroxyacyl-thioester dehydratase type 2, mitochondrial (htd2) from Schizosaccharomyces pombe (strain 972 / ATCC 24843) (Fission yeast).